The following is a 412-amino-acid chain: MEHFLKKAKASASELLRIDGAKKKSVLLQIADDIEKNSNKILAANEKDMALAREMNLSSALIDRLFLDEKRVRSMAESVREIAMLKDPVGRVLDGWVLDNGLRIEKVSIPIGVIGIIYESRPNVTSDAAALCFKSGNVSILKGGKEAKNSNEAIAETIQAVLEKNDLPKELVSLLPDYSREGVEKLIKMDKYVDLIIPRGGEGLIRYVSENATVPVVKHDKGLCHTYIDKDADFDKAVAIAVNAKVQRPGVCNAMETLLVDYAIKDEILLKLYEAFKPHMTTLKGCALTKEVLPDIETASEEDFHTEYLENILSIKVVDGVEEAIEHIRKYGSGHSEAIVTENYTTAEKFMNEVDAACVYVNASTRFTDGGVFGFGAEVGISTNKLHARGPMGINDLTTYKYKIYGEGQIRQ.

Belongs to the gamma-glutamyl phosphate reductase family.

It is found in the cytoplasm. It carries out the reaction L-glutamate 5-semialdehyde + phosphate + NADP(+) = L-glutamyl 5-phosphate + NADPH + H(+). The protein operates within amino-acid biosynthesis; L-proline biosynthesis; L-glutamate 5-semialdehyde from L-glutamate: step 2/2. Catalyzes the NADPH-dependent reduction of L-glutamate 5-phosphate into L-glutamate 5-semialdehyde and phosphate. The product spontaneously undergoes cyclization to form 1-pyrroline-5-carboxylate. This is Gamma-glutamyl phosphate reductase from Nitratiruptor sp. (strain SB155-2).